The primary structure comprises 381 residues: Protein YkfC (381 aa).

In terms of domain architecture, Reverse transcriptase spans 72–337; the sequence is LRDELLSGHY…DGFIFLGHRL (266 aa). The Mg(2+) site is built by Asp-166, Asp-284, and Asp-285.

Belongs to the bacterial reverse transcriptase family.

The sequence is that of Protein YkfC (ykfC) from Escherichia coli (strain K12).